Here is a 727-residue protein sequence, read N- to C-terminus: Sodium-dependent neutral amino acid transporter SLC6A17 (727 aa).

The Cytoplasmic segment spans residues 1-69 (MPKNSKVTQR…RPAWNSKLQY (69 aa)). A phosphoserine mark is found at serine 13 and serine 20. Residues 70-90 (ILAQIGFSVGLGNIWRFPYLC) form a helical membrane-spanning segment. Residues 91-95 (QKNGG) are Extracellular-facing. A helical membrane pass occupies residues 96–116 (GAYLVPYLVLLIIIGIPLFFL). The Cytoplasmic portion of the chain corresponds to 117–147 (ELAVGQRIRRGSIGVWHYICPRLGGIGFSSC). A helical transmembrane segment spans residues 148–168 (IVCLFVGLYYNVIIGWSIFYF). Topologically, residues 169-222 (FKSFQYPLPWSECPVVRNGSVAVVEAECEKSSATTYFWYREALDISDSISESGG) are extracellular. An N-linked (GlcNAc...) asparagine glycan is attached at asparagine 186. A helical transmembrane segment spans residues 223 to 243 (LNWKMTLCLLVAWSIVGMAVV). The Cytoplasmic segment spans residues 244 to 253 (KGIQSSGKVM). Residues 254–274 (YFSSLFPYVVLACFLVRGLLL) traverse the membrane as a helical segment. Residues 275–300 (RGAVDGILHMFTPKLDKMLDPQVWRE) lie on the Extracellular side of the membrane. The chain crosses the membrane as a helical span at residues 301–321 (AATQVFFALGLGFGGVIAFSS). Over 322–334 (YNKQDNNCHFDAA) the chain is Cytoplasmic. Residues 335-355 (LVSFINFFTSVLATLVVFAVL) form a helical membrane-spanning segment. Over 356–460 (GFKANIMNEK…HFPASPFWSV (105 aa)) the chain is Extracellular. Tyrosine 377 bears the Phosphotyrosine mark. The N-linked (GlcNAc...) asparagine glycan is linked to asparagine 393. The chain crosses the membrane as a helical span at residues 461–481 (MFFLMLINLGLGSMIGTMAGI). The Cytoplasmic portion of the chain corresponds to 482 to 490 (TTPIIDTFK). A helical transmembrane segment spans residues 491-511 (VPKEMFTVGCCVFAFLVGLLF). The Extracellular portion of the chain corresponds to 512-527 (VQRSGNYFVTMFDDYS). A helical membrane pass occupies residues 528 to 548 (ATLPLTLIVILENIAVAWIYG). Residues 549–573 (TKKFMQELTEMLGFRPYRFYFYMWK) are Cytoplasmic-facing. The chain crosses the membrane as a helical span at residues 574-594 (FVSPLCMAVLTTASIIQLGVT). The Extracellular portion of the chain corresponds to 595-617 (PPGYSAWIKEEAAERYLYFPNWA). Residues 618–638 (MALLITLIVVATLPIPVVFVL) traverse the membrane as a helical segment. At 639 to 727 (RHFHLLSDGS…LLASTPESEL (89 aa)) the chain is on the cytoplasmic side. Serine 665 and serine 701 each carry phosphoserine. The segment at 680 to 727 (VPSEAPSPMPTHRSYLGPGSTSPLETSGNPNGRYGSGYLLASTPESEL) is disordered. Residues 698–709 (GSTSPLETSGNP) are compositionally biased toward polar residues.

It belongs to the sodium:neurotransmitter symporter (SNF) (TC 2.A.22) family.

Its subcellular location is the cytoplasmic vesicle. It is found in the secretory vesicle. It localises to the synaptic vesicle membrane. The protein resides in the postsynapse. The protein localises to the presynapse. It carries out the reaction L-proline(in) + Na(+)(in) = L-proline(out) + Na(+)(out). It catalyses the reaction L-leucine(in) + Na(+)(in) = L-leucine(out) + Na(+)(out). The catalysed reaction is glycine(in) + Na(+)(in) = glycine(out) + Na(+)(out). The enzyme catalyses L-alanine(in) + Na(+)(in) = L-alanine(out) + Na(+)(out). It carries out the reaction L-glutamine(in) + Na(+)(in) = L-glutamine(out) + Na(+)(out). Its function is as follows. Synaptic vesicle transporter with apparent selectivity for neutral amino acids. The transport is sodium-coupled but chloride-independent, likely driven by the proton electrochemical gradient generated by vacuolar H(+)-ATPase in an overall electrogenic mechanism. May contribute to the synaptic uptake of neurotransmitter precursors in a process coupled in part to vesicle exocytosis. In Homo sapiens (Human), this protein is Sodium-dependent neutral amino acid transporter SLC6A17.